The chain runs to 192 residues: Phosphoheptose isomerase (192 aa).

An SIS domain is found at 34 to 192 (LADALGNGKK…LEKRLFGERR (159 aa)). 49 to 51 (NGG) is a substrate binding site. The Zn(2+) site is built by H58 and E62. Substrate contacts are provided by residues E62, 91-92 (ND), 117-119 (STS), S122, and Q169. Residues Q169 and H177 each contribute to the Zn(2+) site.

It belongs to the SIS family. GmhA subfamily. As to quaternary structure, homotetramer. Zn(2+) serves as cofactor.

It is found in the cytoplasm. The catalysed reaction is 2 D-sedoheptulose 7-phosphate = D-glycero-alpha-D-manno-heptose 7-phosphate + D-glycero-beta-D-manno-heptose 7-phosphate. It participates in carbohydrate biosynthesis; D-glycero-D-manno-heptose 7-phosphate biosynthesis; D-glycero-alpha-D-manno-heptose 7-phosphate and D-glycero-beta-D-manno-heptose 7-phosphate from sedoheptulose 7-phosphate: step 1/1. Functionally, catalyzes the isomerization of sedoheptulose 7-phosphate in D-glycero-D-manno-heptose 7-phosphate. The protein is Phosphoheptose isomerase of Geotalea daltonii (strain DSM 22248 / JCM 15807 / FRC-32) (Geobacter daltonii).